Consider the following 492-residue polypeptide: N-succinylglutamate 5-semialdehyde dehydrogenase (492 aa).

220–225 serves as a coordination point for NAD(+); the sequence is GSANTG. Catalysis depends on residues Glu243 and Cys277.

The protein belongs to the aldehyde dehydrogenase family. AstD subfamily.

It catalyses the reaction N-succinyl-L-glutamate 5-semialdehyde + NAD(+) + H2O = N-succinyl-L-glutamate + NADH + 2 H(+). Its pathway is amino-acid degradation; L-arginine degradation via AST pathway; L-glutamate and succinate from L-arginine: step 4/5. Functionally, catalyzes the NAD-dependent reduction of succinylglutamate semialdehyde into succinylglutamate. The chain is N-succinylglutamate 5-semialdehyde dehydrogenase from Escherichia coli O7:K1 (strain IAI39 / ExPEC).